A 435-amino-acid chain; its full sequence is Serine/threonine-protein kinase 40 (435 aa).

Basic and acidic residues predominate over residues 1–10; it reads MKRRASDRGA. Residues 1–25 form a disordered region; that stretch reads MKRRASDRGAGETSARAKALGSGIS. Residues 35–331 form the Protein kinase domain; the sequence is FILGPRLGNS…ADVLEALSAI (297 aa). ATP contacts are provided by residues 41 to 49 and Lys66; that span reads LGNSPVPSI. Arg196 serves as the catalytic Proton acceptor.

Belongs to the protein kinase superfamily. CAMK Ser/Thr protein kinase family. As to expression, strongly expressed in heart, brain, placenta, lung, skeletal muscle, kidney, spleen, thymus, prostate, liver, pancreas, testis, ovary, small intestine, colon and peripheral blood leukocytes.

The protein resides in the nucleus. It localises to the cytoplasm. It catalyses the reaction L-seryl-[protein] + ATP = O-phospho-L-seryl-[protein] + ADP + H(+). The enzyme catalyses L-threonyl-[protein] + ATP = O-phospho-L-threonyl-[protein] + ADP + H(+). Functionally, may be a negative regulator of NF-kappa-B and p53-mediated gene transcription. The chain is Serine/threonine-protein kinase 40 (STK40) from Homo sapiens (Human).